The chain runs to 564 residues: Dicarboxylate transporter 2, chloroplastic (564 aa).

A chloroplast-targeting transit peptide spans 1 to 22 (MESLALLPTLSLSTTTTTSKAT). The disordered stretch occupies residues 35-58 (RRPHLSLSLSSTPKPTLTFSSHSH). Residues 39-58 (LSLSLSSTPKPTLTFSSHSH) show a composition bias toward low complexity. Helical transmembrane passes span 94–114 (GAKLIPLILSVSVGLLLRFAV), 127–147 (LLAIFLSTVAGLVLSPLPVGA), 166–186 (TAFCAFTNEVIWLIVISFFFA), 235–255 (AGGIFLPIIKSLSISSGSLPG), 262–282 (LGTYLIMTQFQSAGNSSALFL), 307–327 (VFWLKAASLPAFVALLLTPLI), 356–376 (VTKNEWVMVGTMLLAVSLWVF), 380–400 (IGVSSVVAAMLGLSVLLLLGV), 415–435 (TLAWFAVLVGMASQLTNLGIV), 451–471 (LSWPAAFGILQAAYFFVHYLF), 484–504 (AFLAMNIASGVPGVLAALALA), and 538–558 (MGFIMAVINATIWTVVGGVWW).

This sequence belongs to the SLC13A/DASS transporter (TC 2.A.47) family. DIT1 subfamily. Expressed in leaves.

The protein localises to the plastid. It is found in the chloroplast inner membrane. In terms of biological role, glutamate/malate translocator involved with DIT1 in primary ammonia assimilation and in the re-assimilation of ammonia generated by the photorespiratory pathway. Exports the end product of ammonia assimilation, glutamate, from plastids to the cytosol. The precursor for ammonia assimilation, 2-oxoglutarate, is imported from the cytosol by DIT1. This is Dicarboxylate transporter 2, chloroplastic (DIT2) from Spinacia oleracea (Spinach).